Reading from the N-terminus, the 256-residue chain is Acetylglutamate kinase (256 aa).

Substrate-binding positions include 40-41, Arg-62, and Asn-154; that span reads GG.

This sequence belongs to the acetylglutamate kinase family. ArgB subfamily.

It is found in the cytoplasm. It carries out the reaction N-acetyl-L-glutamate + ATP = N-acetyl-L-glutamyl 5-phosphate + ADP. It participates in amino-acid biosynthesis; L-arginine biosynthesis; N(2)-acetyl-L-ornithine from L-glutamate: step 2/4. Its function is as follows. Catalyzes the ATP-dependent phosphorylation of N-acetyl-L-glutamate. The polypeptide is Acetylglutamate kinase (Staphylococcus aureus (strain MRSA252)).